The sequence spans 44 residues: Photosystem I reaction center subunit IX (44 aa).

A helical transmembrane segment spans residues 7-27; that stretch reads YLSVAPVISTLWFGSLAGLLI.

The protein belongs to the PsaJ family.

Its subcellular location is the plastid. The protein localises to the chloroplast thylakoid membrane. Its function is as follows. May help in the organization of the PsaE and PsaF subunits. The polypeptide is Photosystem I reaction center subunit IX (Populus alba (White poplar)).